The following is a 1034-amino-acid chain: Translation initiation factor IF-2 (1034 aa).

Disordered stretches follow at residues 118–140 and 154–446; these read AAEAVDMQPESVEAQAPAPQSVE and EAEA…NESA. Low complexity-rich tracts occupy residues 162-178 and 212-228; these read TPPVETPAVEAVEAAAP and PAVKAEAEPQSAQPAAS. The span at 304–315 shows a compositional bias: basic and acidic residues; the sequence is DRAREDARRAAE. Residues 535-702 enclose the tr-type G domain; it reads PRAPVVTVMG…NVLLQAEILE (168 aa). The tract at residues 544–551 is G1; sequence GHVDHGKT. 544-551 serves as a coordination point for GTP; sequence GHVDHGKT. A G2 region spans residues 569–573; the sequence is GITQH. The G3 stretch occupies residues 590–593; it reads DTPG. Residues 590–594 and 644–647 each bind GTP; these read DTPGH and NKID. The segment at 644–647 is G4; it reads NKID. Positions 680–682 are G5; the sequence is SAK.

It belongs to the TRAFAC class translation factor GTPase superfamily. Classic translation factor GTPase family. IF-2 subfamily.

It is found in the cytoplasm. Functionally, one of the essential components for the initiation of protein synthesis. Protects formylmethionyl-tRNA from spontaneous hydrolysis and promotes its binding to the 30S ribosomal subunits. Also involved in the hydrolysis of GTP during the formation of the 70S ribosomal complex. The protein is Translation initiation factor IF-2 of Bordetella avium (strain 197N).